The sequence spans 163 residues: Putative pre-16S rRNA nuclease (163 aa).

This sequence belongs to the YqgF nuclease family.

It is found in the cytoplasm. Its function is as follows. Could be a nuclease involved in processing of the 5'-end of pre-16S rRNA. The polypeptide is Putative pre-16S rRNA nuclease (Chlamydia caviae (strain ATCC VR-813 / DSM 19441 / 03DC25 / GPIC) (Chlamydophila caviae)).